The primary structure comprises 296 residues: Short-chain dehydrogenase/reductase ascJ (296 aa).

Positions 28, 66, and 93 each coordinate NADP(+). The Proton donor role is filled by serine 155. The NADP(+) site is built by tyrosine 168, lysine 172, and threonine 205. The active-site Proton acceptor is tyrosine 168. Lysine 172 functions as the Lowers pKa of active site Tyr in the catalytic mechanism.

It belongs to the short-chain dehydrogenases/reductases (SDR) family.

The enzyme catalyses ascofuranol + A = ascofuranone + AH2. The protein operates within secondary metabolite biosynthesis; terpenoid biosynthesis. In terms of biological role, short-chain dehydrogenase/reductase; part of the asc-2 gene cluster that mediates the biosynthesis of ascofuranone, a strong inhibitor of cyanide-insensitive alternative oxidases and a promising drug candidate against African trypanosomiasis. The first step in the pathway is performed by the non-reducing polyketide synthase ascC that produces orsellinic acid by condensing acetyl-CoA with 3 malonyl-CoA units. Orsellinic acid is then prenylated by the prenyltransferase ascA to yield ilicicolinic acid B. Ilicicolinic acid B is further reduced to ilicicolin B by the reductase ascB. The halogenase ascD then chlorinates ilicicolin B to produce ilicicolin A which is converted to ilicicolin A epoxide by the cytochrome P450 monooxygenase ascE that catalyzes stereoselective epoxidation of the terminal double bond of the prenyl group. Ilicicolin A epoxide is the last common precursor for the biosynthesis of ascofuranone and ascochlorin. The terpene cyclase ascF produces a monocyclic terpene, and the cyclization reaction is proposed to be initiated by protonation of the terminal epoxide of ilicicolin A epoxide to generate a monocyclic tertiarycation, which is followed by a series of hydride and methyl shifts with abstraction of proton, leading to the formation of the (14S,15R,19R)-trimethylcyclohexanone ring structure of ilicicolin C, which is finally reduced to ascochlorin by the dehydrogenase ascG. On the other hand, ilicicolin A epoxide is hydroxylated by the cytochrome P450 monooxygenase ascH, and the resultant product is cyclized by the terpene cyclase ascI to ascofuranol via protonation-initiated epoxide ring opening, which facilitates the 6-endo-tet cyclization to form the tetrahy-drofuran ring. Finally, ascofuranol is oxidized into ascofuranone by ascJ. The chain is Short-chain dehydrogenase/reductase ascJ from Acremonium egyptiacum (Oospora egyptiaca).